Reading from the N-terminus, the 417-residue chain is Tyrosine--tRNA ligase (417 aa).

Tyr39 lines the L-tyrosine pocket. Positions 44 to 53 match the 'HIGH' region motif; that stretch reads PTASSLHAGS. L-tyrosine is bound by residues Tyr176 and Gln180. A 'KMSKS' region motif is present at residues 236–240; sequence KMGKS. Residue Lys239 participates in ATP binding. The S4 RNA-binding domain occupies 350-417; that stretch reads AGLLALLVQA…KKKHVLIKPL (68 aa).

Belongs to the class-I aminoacyl-tRNA synthetase family. TyrS type 1 subfamily. Homodimer.

It is found in the cytoplasm. The enzyme catalyses tRNA(Tyr) + L-tyrosine + ATP = L-tyrosyl-tRNA(Tyr) + AMP + diphosphate + H(+). Functionally, catalyzes the attachment of tyrosine to tRNA(Tyr) in a two-step reaction: tyrosine is first activated by ATP to form Tyr-AMP and then transferred to the acceptor end of tRNA(Tyr). The sequence is that of Tyrosine--tRNA ligase from Bartonella quintana (strain Toulouse) (Rochalimaea quintana).